A 276-amino-acid chain; its full sequence is Bifunctional protein FolD (276 aa).

NADP(+)-binding positions include 157 to 159 (NRS), serine 182, and isoleucine 223.

It belongs to the tetrahydrofolate dehydrogenase/cyclohydrolase family. Homodimer.

The enzyme catalyses (6R)-5,10-methylene-5,6,7,8-tetrahydrofolate + NADP(+) = (6R)-5,10-methenyltetrahydrofolate + NADPH. It carries out the reaction (6R)-5,10-methenyltetrahydrofolate + H2O = (6R)-10-formyltetrahydrofolate + H(+). The protein operates within one-carbon metabolism; tetrahydrofolate interconversion. Catalyzes the oxidation of 5,10-methylenetetrahydrofolate to 5,10-methenyltetrahydrofolate and then the hydrolysis of 5,10-methenyltetrahydrofolate to 10-formyltetrahydrofolate. The protein is Bifunctional protein FolD of Thermoplasma acidophilum (strain ATCC 25905 / DSM 1728 / JCM 9062 / NBRC 15155 / AMRC-C165).